The chain runs to 467 residues: UDP-N-acetylmuramate--L-alanine ligase (467 aa).

ATP is bound at residue 112–118; sequence GTHGKTT.

The protein belongs to the MurCDEF family.

It localises to the cytoplasm. The catalysed reaction is UDP-N-acetyl-alpha-D-muramate + L-alanine + ATP = UDP-N-acetyl-alpha-D-muramoyl-L-alanine + ADP + phosphate + H(+). Its pathway is cell wall biogenesis; peptidoglycan biosynthesis. Its function is as follows. Cell wall formation. This chain is UDP-N-acetylmuramate--L-alanine ligase, found in Polaromonas sp. (strain JS666 / ATCC BAA-500).